Reading from the N-terminus, the 447-residue chain is MALLPSMYIRDSADHVGEAVKLAGWVYHKTEKGKLVFIQLRDGTATIQCVVFKKNVSEEVFARAKELTQESSCYIHGTLRADERSSLGFELDVTDIEIVHLTQNYPITPKEHGTQFLMEHRHLWVRSAKQHALLRIRAQVIAAAQEYLNSEHFVRYDSPILTATAAEGTSDLFATEYFDLGNAYLAQTGQLYVESGMATFGRVYCFGPTFRAEKSKTRRHLTEFWMIEPEFAFADQDDNMELQENFVSYIVQRVLDRCEEDLKILERDTSKLENIVPPFPRISYDEAIEKIKQGVAAGATVAPDNAPLADLEWGDDFGAPHETYLASLFDKPLFIYNYPTKVKAFYMQPAEGRPEVVRCADLIAPEGYGEIIGGSQRIHDAELLEARIREHGLDVADYQWYLDLRRYGSVPHSGFGMGIERCVAWLAGTRHIREAIPFPRQLYRIYP.

The protein belongs to the class-II aminoacyl-tRNA synthetase family. As to quaternary structure, homodimer.

The protein localises to the cytoplasm. The catalysed reaction is tRNA(Asn) + L-asparagine + ATP = L-asparaginyl-tRNA(Asn) + AMP + diphosphate + H(+). This is Asparagine--tRNA ligase from Herpetosiphon aurantiacus (strain ATCC 23779 / DSM 785 / 114-95).